The chain runs to 307 residues: UDP-3-O-acyl-N-acetylglucosamine deacetylase (307 aa).

Residues histidine 78, histidine 241, and aspartate 245 each contribute to the Zn(2+) site. Residue histidine 268 is the Proton donor of the active site.

This sequence belongs to the LpxC family. It depends on Zn(2+) as a cofactor.

It catalyses the reaction a UDP-3-O-[(3R)-3-hydroxyacyl]-N-acetyl-alpha-D-glucosamine + H2O = a UDP-3-O-[(3R)-3-hydroxyacyl]-alpha-D-glucosamine + acetate. It participates in glycolipid biosynthesis; lipid IV(A) biosynthesis; lipid IV(A) from (3R)-3-hydroxytetradecanoyl-[acyl-carrier-protein] and UDP-N-acetyl-alpha-D-glucosamine: step 2/6. In terms of biological role, catalyzes the hydrolysis of UDP-3-O-myristoyl-N-acetylglucosamine to form UDP-3-O-myristoylglucosamine and acetate, the committed step in lipid A biosynthesis. In Variovorax paradoxus (strain S110), this protein is UDP-3-O-acyl-N-acetylglucosamine deacetylase.